A 222-amino-acid chain; its full sequence is Endonuclease V (222 aa).

The Mg(2+) site is built by aspartate 34 and aspartate 102.

Belongs to the endonuclease V family. Mg(2+) serves as cofactor.

Its subcellular location is the cytoplasm. The catalysed reaction is Endonucleolytic cleavage at apurinic or apyrimidinic sites to products with a 5'-phosphate.. Functionally, DNA repair enzyme involved in the repair of deaminated bases. Selectively cleaves double-stranded DNA at the second phosphodiester bond 3' to a deoxyinosine leaving behind the intact lesion on the nicked DNA. The sequence is that of Endonuclease V from Proteus mirabilis (strain HI4320).